Consider the following 353-residue polypeptide: Dihydroorotate dehydrogenase (quinone) (353 aa).

FMN-binding positions include 67–71 (AGFDK) and T91. K71 serves as a coordination point for substrate. 116 to 120 (NRMGF) is a substrate binding site. Residues N144 and N177 each coordinate FMN. Residue N177 participates in substrate binding. Catalysis depends on S180, which acts as the Nucleophile. N182 serves as a coordination point for substrate. Residues K215 and T243 each contribute to the FMN site. 244-245 (NT) is a binding site for substrate. FMN contacts are provided by residues G264, G293, and 314-315 (YT).

It belongs to the dihydroorotate dehydrogenase family. Type 2 subfamily. As to quaternary structure, monomer. It depends on FMN as a cofactor.

It is found in the cell membrane. The enzyme catalyses (S)-dihydroorotate + a quinone = orotate + a quinol. It functions in the pathway pyrimidine metabolism; UMP biosynthesis via de novo pathway; orotate from (S)-dihydroorotate (quinone route): step 1/1. In terms of biological role, catalyzes the conversion of dihydroorotate to orotate with quinone as electron acceptor. This is Dihydroorotate dehydrogenase (quinone) from Gloeobacter violaceus (strain ATCC 29082 / PCC 7421).